Consider the following 83-residue polypeptide: Large ribosomal subunit protein bL27c (83 aa).

Residues 1–24 (MAHKKGAGSTKNGRDSNAKRLGVK) are disordered.

The protein belongs to the bacterial ribosomal protein bL27 family.

The protein resides in the plastid. Its subcellular location is the chloroplast. This chain is Large ribosomal subunit protein bL27c (rpl27), found in Trieres chinensis (Marine centric diatom).